The sequence spans 180 residues: Large ribosomal subunit protein uL5 (180 aa).

The protein belongs to the universal ribosomal protein uL5 family. Part of the 50S ribosomal subunit; part of the 5S rRNA/L5/L18/L25 subcomplex. Contacts the 5S rRNA and the P site tRNA. Forms a bridge to the 30S subunit in the 70S ribosome.

In terms of biological role, this is one of the proteins that bind and probably mediate the attachment of the 5S RNA into the large ribosomal subunit, where it forms part of the central protuberance. In the 70S ribosome it contacts protein S13 of the 30S subunit (bridge B1b), connecting the 2 subunits; this bridge is implicated in subunit movement. Contacts the P site tRNA; the 5S rRNA and some of its associated proteins might help stabilize positioning of ribosome-bound tRNAs. The sequence is that of Large ribosomal subunit protein uL5 from Ralstonia nicotianae (strain ATCC BAA-1114 / GMI1000) (Ralstonia solanacearum).